The sequence spans 517 residues: Gamma-1-syntrophin (517 aa).

A PDZ domain is found at 57–140; the sequence is TVTIRRQTVG…EVTLTVSFLK (84 aa). The region spanning 283-390 is the PH domain; the sequence is QIVYMGWCEA…WERAFQTATF (108 aa).

This sequence belongs to the syntrophin family. As to quaternary structure, interacts with the dystrophin protein DMD and related proteins DTNA and DTNB. Interacts with DGKZ.

It localises to the cytoplasm. The protein resides in the cytoskeleton. It is found in the nucleus. Adapter protein that binds to and probably organizes the subcellular localization of a variety of proteins. May link various receptors to the actin cytoskeleton and the dystrophin glycoprotein complex. May participate in regulating the subcellular location of diacylglycerol kinase-zeta to ensure that diacylglycerol is rapidly inactivated following receptor activation. The protein is Gamma-1-syntrophin (Sntg1) of Mus musculus (Mouse).